The primary structure comprises 823 residues: Putative ankyrin repeat domain-containing protein 20A3 (823 aa).

ANK repeat units follow at residues 66–95 (QHRTALHLACASGHVQVVTLLVNRKCQIDV), 99–128 (ENRTPLIQAVHCQEEACAVILLEHGANPNL), 132–161 (YGNTALHYAVYSESTSLAEKLLSHGAHIEA), 165–194 (DNNTPLLFAIICKKEKMVEFLLKRKASSHA), and 198–227 (LRRSALMLAVYYDSPGIVNILLKQNIDVFA). 2 disordered regions span residues 301–343 (VPEK…EVED) and 355–402 (VQTL…LSEN). The span at 372–384 (QERHERSEKKQPQ) shows a compositional bias: basic and acidic residues. Coiled coils occupy residues 431–480 (KKLK…KQLE), 571–724 (AFRY…NNST), and 776–805 (LVLEEKSKKLMNECDHLKESLFQYEREKTE).

The polypeptide is Putative ankyrin repeat domain-containing protein 20A3 (Homo sapiens (Human)).